The sequence spans 471 residues: Heat shock 70 kDa protein 13 (471 aa).

The first 22 residues, 1-22 (MAREMTILGSAVLTLLLAGYLA), serve as a signal peptide directing secretion. Basic and acidic residues predominate over residues 315–341 (EQDRKEPHSSDTELPKDKLSSADDHRV). The segment at 315–352 (EQDRKEPHSSDTELPKDKLSSADDHRVNSGFGRGLSDK) is disordered.

This sequence belongs to the heat shock protein 70 family. In terms of assembly, binds UBQLN2. Constitutively expressed in all tissues.

The protein resides in the microsome. It is found in the endoplasmic reticulum. Functionally, has peptide-independent ATPase activity. The polypeptide is Heat shock 70 kDa protein 13 (HSPA13) (Homo sapiens (Human)).